Consider the following 464-residue polypeptide: MMARRDPKPGAKRLVRAQTLQKQRRAPVGPRAPPPDEEDPRLKCKNCEAFGHTARSTRCPMKCWKAALVPPNFGEKEGKENLKPWKPQVEANPGPLNKDKGEKEERPRPQDPQRKALLHIFSRKPPEKPLPNQKGSTESSDYLRVASGPMPVHTTSKRPRVDPVLSDRSATEMSDRGSVLASLSPLRKASLSSSSSLGPKERQTGAAADIPQTAVRHQGPEPLLVVKPTHSSPAGGCREVPQAASKTHGLLQAVSPQAQDKRPAVTSQPCPPAATHSLGLGSNLSFGPGAKRSAPAPIQACLNFPKKPRLGPFQIPESAIQGGELGAPENLQPPPAATELGPRTSPQTGTRTPAQVLSGDRQPPHSRPCLPTAQACTMSHHPAASHDGAQPLRVLFRRLENGRWSSSLLTAPSFHSPEKPGAFLAQSPHVSEKSEGPCVRVPPSVLYEDLQVPSSSEDSDSDLE.

5 disordered regions span residues 1–43 (MMAR…PRLK), 71–294 (PNFG…KRSA), 312–386 (PFQI…AASH), 412–437 (PSFH…SEGP), and 445–464 (VLYE…SDLE). Composition is skewed to basic and acidic residues over residues 74-83 (GEKEGKENLK) and 97-114 (NKDK…DPQR). The span at 180–197 (LASLSPLRKASLSSSSSL) shows a compositional bias: low complexity. The segment covering 344–355 (TSPQTGTRTPAQ) has biased composition (polar residues).

It belongs to the FAM90 family.

This chain is Protein FAM90A1 (FAM90A1), found in Homo sapiens (Human).